The following is a 205-amino-acid chain: Snake venom metalloproteinase BmooMPalpha-I (205 aa).

The region spanning arginine 8–proline 204 is the Peptidase M12B domain. The Ca(2+) site is built by glutamate 11 and aspartate 95. 3 disulfide bridges follow: cysteine 119/cysteine 199, cysteine 159/cysteine 183, and cysteine 161/cysteine 166. Residue histidine 144 coordinates Zn(2+). Glutamate 145 is a catalytic residue. Zn(2+) contacts are provided by histidine 148 and histidine 154. Ca(2+) is bound by residues cysteine 199 and asparagine 202.

The protein belongs to the venom metalloproteinase (M12B) family. P-I subfamily. In terms of assembly, monomer. Zn(2+) serves as cofactor. In terms of tissue distribution, expressed by the venom gland.

It is found in the secreted. Its activity is regulated as follows. Inhibited by EDTA. Not inhibited by the serine proteinase inhibitors aprotinin and benzamidine. Snake venom zinc metalloproteinase that cleaves the alpha chain of fibrinogen (FGA) first followed by the beta chain (FGB) and shows no effect on the gamma chain. Cleaves only the beta chain of fibrin, leaving the gamma-dimer untouched. Shows proteolytic activity towards azocasein. Causes defibrinogenation when intraperitoneally administered on mice. The protein is Snake venom metalloproteinase BmooMPalpha-I of Bothrops moojeni (Lance-headed viper).